The primary structure comprises 686 residues: Hexamerin 70c (686 aa).

An N-terminal signal peptide occupies residues 1 to 19 (MLSKVVLLVALAAICGAQG). Residues 32–155 (FLHKQKKIFD…IAVLYRPDTK (124 aa)) form the Hemocyanin N-terminal domain. Residues 161-431 (AIYEIYPNYF…MLYQNILSYF (271 aa)) form the Hemocyanin middle domain. Residues Asn205 and Asn662 are each glycosylated (N-linked (GlcNAc...) asparagine). Residues 440 to 676 (QYSQSELQMP…NMYFKDVFIY (237 aa)) enclose the Hemocyanin C-terminal domain.

It belongs to the hemocyanin/hexamerin family. As to quaternary structure, probable homohexamer. Expressed in the fat body and secreted into the hemolymph (at protein level). Present in trophocytes and oenocytes of the fat body (at protein level). Not expressed in ovary or testis.

It is found in the secreted. The protein localises to the nucleus. Its subcellular location is the cytoplasm. The protein resides in the cytoplasmic granule. Functionally, storage protein that may function as a nutrient supply to compensate for lack of dietary proteins during metamorphosis and egg production. In Apis mellifera (Honeybee), this protein is Hexamerin 70c.